We begin with the raw amino-acid sequence, 595 residues long: Adenine deaminase 2 (595 aa).

The protein belongs to the metallo-dependent hydrolases superfamily. Adenine deaminase family. Requires Mn(2+) as cofactor.

The enzyme catalyses adenine + H2O + H(+) = hypoxanthine + NH4(+). This Rhizobium johnstonii (strain DSM 114642 / LMG 32736 / 3841) (Rhizobium leguminosarum bv. viciae) protein is Adenine deaminase 2.